The sequence spans 186 residues: Peptidyl-tRNA hydrolase (186 aa).

Position 14 (Tyr14) interacts with tRNA. The Proton acceptor role is filled by His19. TRNA-binding residues include Phe64, Asn66, and Asn112.

This sequence belongs to the PTH family. In terms of assembly, monomer.

Its subcellular location is the cytoplasm. It catalyses the reaction an N-acyl-L-alpha-aminoacyl-tRNA + H2O = an N-acyl-L-amino acid + a tRNA + H(+). In terms of biological role, hydrolyzes ribosome-free peptidyl-tRNAs (with 1 or more amino acids incorporated), which drop off the ribosome during protein synthesis, or as a result of ribosome stalling. Its function is as follows. Catalyzes the release of premature peptidyl moieties from peptidyl-tRNA molecules trapped in stalled 50S ribosomal subunits, and thus maintains levels of free tRNAs and 50S ribosomes. The sequence is that of Peptidyl-tRNA hydrolase from Mycoplasma capricolum subsp. capricolum (strain California kid / ATCC 27343 / NCTC 10154).